Consider the following 577-residue polypeptide: Myb-like protein N (577 aa).

Disordered regions lie at residues 1 to 23 (MMTINNNNLNNSNNINNNNNIYT), 206 to 225 (TPFSLQCPNSPNSTSSSPLN), and 240 to 264 (SSSSSASSSSTSSQPPSPQTLLSSS). Over residues 213-225 (PNSPNSTSSSPLN) the composition is skewed to low complexity. HTH myb-type domains follow at residues 403 to 465 (KKST…CPAI) and 466 to 517 (RKGS…SREV). 2 consecutive DNA-binding regions (H-T-H motif) follow at residues 437 to 461 (WKKIALQIGGGKTGAQCAQHWKRVL) and 489 to 513 (WKNVASEIRTRTDIQCRYQYFKSCM). The region spanning 518–570 (PWTPKEDEILQKKVIENKQDSTKEIGWMDLSKAMARARQTKIPRTALECKIRF) is the Myb-like domain.

The protein localises to the nucleus. This Dictyostelium discoideum (Social amoeba) protein is Myb-like protein N (mybN).